A 234-amino-acid chain; its full sequence is Thymidylate kinase (234 aa).

11–18 (GLEGSGKT) provides a ligand contact to ATP.

Belongs to the thymidylate kinase family.

The catalysed reaction is dTMP + ATP = dTDP + ADP. In terms of biological role, phosphorylation of dTMP to form dTDP in both de novo and salvage pathways of dTTP synthesis. This is Thymidylate kinase from Wigglesworthia glossinidia brevipalpis.